Here is a 207-residue protein sequence, read N- to C-terminus: Fibroblast growth factor 18 (207 aa).

The first 27 residues, 1–27 (MYSAPSTCTCLCLHFLLLCFQVQVLAA), serve as a signal peptide directing secretion. The N-linked (GlcNAc...) asparagine glycan is linked to N39. C109 and C127 are joined by a disulfide. The N-linked (GlcNAc...) asparagine glycan is linked to N137.

The protein belongs to the heparin-binding growth factors family. In terms of assembly, interacts with FGFR3 and FGFR4.

The protein resides in the secreted. Functionally, plays an important role in the regulation of cell proliferation, cell differentiation and cell migration. Required for normal ossification and bone development. Stimulates hepatic and intestinal proliferation. In Bos taurus (Bovine), this protein is Fibroblast growth factor 18 (FGF18).